A 404-amino-acid polypeptide reads, in one-letter code: Cysteine desulfurase IscS (404 aa).

Pyridoxal 5'-phosphate contacts are provided by residues 75–76 (AT), N155, Q183, and 203–205 (SGH). N6-(pyridoxal phosphate)lysine is present on K206. T243 is a pyridoxal 5'-phosphate binding site. Catalysis depends on C328, which acts as the Cysteine persulfide intermediate. C328 serves as a coordination point for [2Fe-2S] cluster.

It belongs to the class-V pyridoxal-phosphate-dependent aminotransferase family. NifS/IscS subfamily. Homodimer. Forms a heterotetramer with IscU, interacts with other sulfur acceptors. Pyridoxal 5'-phosphate serves as cofactor.

Its subcellular location is the cytoplasm. It catalyses the reaction (sulfur carrier)-H + L-cysteine = (sulfur carrier)-SH + L-alanine. Its pathway is cofactor biosynthesis; iron-sulfur cluster biosynthesis. In terms of biological role, master enzyme that delivers sulfur to a number of partners involved in Fe-S cluster assembly, tRNA modification or cofactor biosynthesis. Catalyzes the removal of elemental sulfur atoms from cysteine to produce alanine. Functions as a sulfur delivery protein for Fe-S cluster synthesis onto IscU, an Fe-S scaffold assembly protein, as well as other S acceptor proteins. The sequence is that of Cysteine desulfurase IscS from Shewanella denitrificans (strain OS217 / ATCC BAA-1090 / DSM 15013).